We begin with the raw amino-acid sequence, 735 residues long: 1,4-alpha-glucan branching enzyme GlgB 1 (735 aa).

Aspartate 418 (nucleophile) is an active-site residue. Glutamate 471 functions as the Proton donor in the catalytic mechanism.

Belongs to the glycosyl hydrolase 13 family. GlgB subfamily. In terms of assembly, monomer.

It carries out the reaction Transfers a segment of a (1-&gt;4)-alpha-D-glucan chain to a primary hydroxy group in a similar glucan chain.. It functions in the pathway glycan biosynthesis; glycogen biosynthesis. Functionally, catalyzes the formation of the alpha-1,6-glucosidic linkages in glycogen by scission of a 1,4-alpha-linked oligosaccharide from growing alpha-1,4-glucan chains and the subsequent attachment of the oligosaccharide to the alpha-1,6 position. The chain is 1,4-alpha-glucan branching enzyme GlgB 1 from Rhizobium johnstonii (strain DSM 114642 / LMG 32736 / 3841) (Rhizobium leguminosarum bv. viciae).